A 449-amino-acid chain; its full sequence is Chromosomal replication initiator protein DnaA (449 aa).

The segment at 1 to 72 (MPNLEELWAY…VEGVYEFAQL (72 aa)) is domain I, interacts with DnaA modulators. The segment at 72–109 (LEVDPVIMTKDELQPAPATDQRPAVEEDDQNLTFKAKT) is domain II. The domain III, AAA+ region stretch occupies residues 110–326 (HLNPKYTFDR…GALVRVQAFS (217 aa)). ATP-binding residues include glycine 154, glycine 156, lysine 157, and threonine 158. Positions 327–449 (TMKNEDITTS…ELRNILKNRG (123 aa)) are domain IV, binds dsDNA.

The protein belongs to the DnaA family. Oligomerizes as a right-handed, spiral filament on DNA at oriC.

Its subcellular location is the cytoplasm. Functionally, plays an essential role in the initiation and regulation of chromosomal replication. ATP-DnaA binds to the origin of replication (oriC) to initiate formation of the DNA replication initiation complex once per cell cycle. Binds the DnaA box (a 9 base pair repeat at the origin) and separates the double-stranded (ds)DNA. Forms a right-handed helical filament on oriC DNA; dsDNA binds to the exterior of the filament while single-stranded (ss)DNA is stabiized in the filament's interior. The ATP-DnaA-oriC complex binds and stabilizes one strand of the AT-rich DNA unwinding element (DUE), permitting loading of DNA polymerase. After initiation quickly degrades to an ADP-DnaA complex that is not apt for DNA replication. Binds acidic phospholipids. The protein is Chromosomal replication initiator protein DnaA of Lacticaseibacillus casei (strain BL23) (Lactobacillus casei).